The primary structure comprises 530 residues: UDP-glucuronosyltransferase 2B31 (530 aa).

The first 24 residues, 1–24 (MSMKWISVLLGLQLSCYFSSGSCG), serve as a signal peptide directing secretion. Lysine 136 bears the N6-succinyllysine mark. Asparagine 316 carries N-linked (GlcNAc...) asparagine glycosylation. A helical membrane pass occupies residues 495-515 (IGFLLACVATAIFVTTQCCLF).

Belongs to the UDP-glycosyltransferase family.

The protein localises to the microsome membrane. The protein resides in the endoplasmic reticulum membrane. It carries out the reaction glucuronate acceptor + UDP-alpha-D-glucuronate = acceptor beta-D-glucuronoside + UDP + H(+). UDPGTs are of major importance in the conjugation and subsequent elimination of potentially toxic xenobiotics and endogenous compounds. This isozyme has glucuronidating capacity on phenols, opioids, and carboxylic acid-containing drugs. The sequence is that of UDP-glucuronosyltransferase 2B31 (UGT2B31) from Canis lupus familiaris (Dog).